A 228-amino-acid chain; its full sequence is Urease accessory protein UreF 1 (228 aa).

The protein belongs to the UreF family. In terms of assembly, ureD, UreF and UreG form a complex that acts as a GTP-hydrolysis-dependent molecular chaperone, activating the urease apoprotein by helping to assemble the nickel containing metallocenter of UreC. The UreE protein probably delivers the nickel.

Its subcellular location is the cytoplasm. Its function is as follows. Required for maturation of urease via the functional incorporation of the urease nickel metallocenter. In Brucella canis (strain ATCC 23365 / NCTC 10854 / RM-666), this protein is Urease accessory protein UreF 1.